A 274-amino-acid polypeptide reads, in one-letter code: uncharacterized protein (274 aa).

It belongs to the class IV-like SAM-binding methyltransferase superfamily. RNA methyltransferase TrmH family.

This is an uncharacterized protein from Synechocystis sp. (strain ATCC 27184 / PCC 6803 / Kazusa).